Consider the following 352-residue polypeptide: Protein pelota homolog (352 aa).

Belongs to the eukaryotic release factor 1 family. Pelota subfamily. In terms of assembly, monomer. The cofactor is a divalent metal cation.

The protein localises to the cytoplasm. In terms of biological role, may function in recognizing stalled ribosomes, interact with stem-loop structures in stalled mRNA molecules, and effect endonucleolytic cleavage of the mRNA. May play a role in the release non-functional ribosomes and degradation of damaged mRNAs. Has endoribonuclease activity. The chain is Protein pelota homolog from Thermofilum pendens (strain DSM 2475 / Hrk 5).